We begin with the raw amino-acid sequence, 690 residues long: MPRVHAIEDYRNFGIMAHIDAGKTTTTERILFYTGKSHKIGEVHEGAATMDWMTQEQERGITITSAATTAFWNGKRLNIIDTPGHVDFTIEVERSLRVLDGAVCVLDSNQGVEPQTETVWRQGDKYKVPRIVFANKMDKTGADFFKCLQDIVDRLGAKPVAIQLPIGSENNFKGVIDLVRMKAVVWNDESLGAKFEDAEIPAELLDQAKEYREKMIEAAVELDDDAMSAYLEGNEPDEATLKRLIRKAVLTGAFYPVLCGSAFKNKGVQPLLDAVVDYLPSPLDVPAIKGTDDKGNEVVRKADDKEPLSLLAFKIMDDPFVGTITFCRIYSGVLLSGTGVVNSTREKKERIGRMLLMHANNREDIKEAYAGDIVALAGLKEARTGDTLCDPANPVILEKMEFPEPVIEIAIEPKSKADQEKLGVALAKLAAEDPSFRVSTDLESGQTILKGMGELHLDIKVDILKRTYKVDANIGAPQVAFRERITKKAEVDYTHKKQTGGTGQFAAVSFVVEPNEPGGGYVFESKIVGGAVPKEYIPGVEKGIESVLSSGVVAGFPVVDVKVTLVDGKYHDVDSSALAFEIASRAAFREALQKGKSVLLEPIMKVEVVTPEDYTGSVIGDLNSRRGQIQGQDMRGNANVINAMVPLMNMFGYVNNLRSMSQGRANFTMQFDHYAEAPANVSAEVQKKFA.

The tr-type G domain maps to 8–283 (EDYRNFGIMA…AVVDYLPSPL (276 aa)). Residues 17-24 (AHIDAGKT), 81-85 (DTPGH), and 135-138 (NKMD) contribute to the GTP site.

This sequence belongs to the TRAFAC class translation factor GTPase superfamily. Classic translation factor GTPase family. EF-G/EF-2 subfamily.

It is found in the cytoplasm. Functionally, catalyzes the GTP-dependent ribosomal translocation step during translation elongation. During this step, the ribosome changes from the pre-translocational (PRE) to the post-translocational (POST) state as the newly formed A-site-bound peptidyl-tRNA and P-site-bound deacylated tRNA move to the P and E sites, respectively. Catalyzes the coordinated movement of the two tRNA molecules, the mRNA and conformational changes in the ribosome. The sequence is that of Elongation factor G from Rhodopseudomonas palustris (strain ATCC BAA-98 / CGA009).